We begin with the raw amino-acid sequence, 75 residues long: Protein SlyX homolog (75 aa).

The protein belongs to the SlyX family.

The polypeptide is Protein SlyX homolog (Chromobacterium violaceum (strain ATCC 12472 / DSM 30191 / JCM 1249 / CCUG 213 / NBRC 12614 / NCIMB 9131 / NCTC 9757 / MK)).